The sequence spans 313 residues: Protein FixB (313 aa).

255 to 283 (LYLAVGISGQIQHMVGANASQTIFAINKD) is an FAD binding site.

Belongs to the ETF alpha-subunit/FixB family. Heterodimer of FixA and FixB.

It functions in the pathway amine and polyamine metabolism; carnitine metabolism. In terms of biological role, required for anaerobic carnitine reduction. May bring reductant to CaiA. The protein is Protein FixB of Escherichia coli O8 (strain IAI1).